The following is a 249-amino-acid chain: Segregation and condensation protein A (249 aa).

It belongs to the ScpA family. In terms of assembly, component of a cohesin-like complex composed of ScpA, ScpB and the Smc homodimer, in which ScpA and ScpB bind to the head domain of Smc. The presence of the three proteins is required for the association of the complex with DNA.

The protein localises to the cytoplasm. Functionally, participates in chromosomal partition during cell division. May act via the formation of a condensin-like complex containing Smc and ScpB that pull DNA away from mid-cell into both cell halves. The chain is Segregation and condensation protein A from Oceanobacillus iheyensis (strain DSM 14371 / CIP 107618 / JCM 11309 / KCTC 3954 / HTE831).